The chain runs to 356 residues: UDP-N-acetylglucosamine--N-acetylmuramyl-(pentapeptide) pyrophosphoryl-undecaprenol N-acetylglucosamine transferase (356 aa).

UDP-N-acetyl-alpha-D-glucosamine contacts are provided by residues 10–12 (TAG), Asn123, Arg159, Ser193, Ile240, and Gln284.

The protein belongs to the glycosyltransferase 28 family. MurG subfamily.

It localises to the cell membrane. It carries out the reaction di-trans,octa-cis-undecaprenyl diphospho-N-acetyl-alpha-D-muramoyl-L-alanyl-D-glutamyl-meso-2,6-diaminopimeloyl-D-alanyl-D-alanine + UDP-N-acetyl-alpha-D-glucosamine = di-trans,octa-cis-undecaprenyl diphospho-[N-acetyl-alpha-D-glucosaminyl-(1-&gt;4)]-N-acetyl-alpha-D-muramoyl-L-alanyl-D-glutamyl-meso-2,6-diaminopimeloyl-D-alanyl-D-alanine + UDP + H(+). It participates in cell wall biogenesis; peptidoglycan biosynthesis. Functionally, cell wall formation. Catalyzes the transfer of a GlcNAc subunit on undecaprenyl-pyrophosphoryl-MurNAc-pentapeptide (lipid intermediate I) to form undecaprenyl-pyrophosphoryl-MurNAc-(pentapeptide)GlcNAc (lipid intermediate II). This chain is UDP-N-acetylglucosamine--N-acetylmuramyl-(pentapeptide) pyrophosphoryl-undecaprenol N-acetylglucosamine transferase, found in Corynebacterium glutamicum (strain ATCC 13032 / DSM 20300 / JCM 1318 / BCRC 11384 / CCUG 27702 / LMG 3730 / NBRC 12168 / NCIMB 10025 / NRRL B-2784 / 534).